We begin with the raw amino-acid sequence, 128 residues long: Large ribosomal subunit protein bL20 (128 aa).

This sequence belongs to the bacterial ribosomal protein bL20 family.

Its function is as follows. Binds directly to 23S ribosomal RNA and is necessary for the in vitro assembly process of the 50S ribosomal subunit. It is not involved in the protein synthesizing functions of that subunit. The polypeptide is Large ribosomal subunit protein bL20 (Corynebacterium efficiens (strain DSM 44549 / YS-314 / AJ 12310 / JCM 11189 / NBRC 100395)).